The following is a 110-amino-acid chain: ATP synthase epsilon chain (110 aa).

The protein belongs to the ATPase epsilon chain family. As to quaternary structure, F-type ATPases have 2 components, CF(1) - the catalytic core - and CF(0) - the membrane proton channel. CF(1) has five subunits: alpha(3), beta(3), gamma(1), delta(1), epsilon(1). CF(0) has three main subunits: a, b and c.

The protein resides in the cell inner membrane. Functionally, produces ATP from ADP in the presence of a proton gradient across the membrane. In Rickettsia typhi (strain ATCC VR-144 / Wilmington), this protein is ATP synthase epsilon chain.